The sequence spans 213 residues: N-(5'-phosphoribosyl)anthranilate isomerase (213 aa).

The protein belongs to the TrpF family.

It carries out the reaction N-(5-phospho-beta-D-ribosyl)anthranilate = 1-(2-carboxyphenylamino)-1-deoxy-D-ribulose 5-phosphate. It participates in amino-acid biosynthesis; L-tryptophan biosynthesis; L-tryptophan from chorismate: step 3/5. This is N-(5'-phosphoribosyl)anthranilate isomerase from Methylibium petroleiphilum (strain ATCC BAA-1232 / LMG 22953 / PM1).